The sequence spans 139 residues: uncharacterized protein (139 aa).

The region spanning 19–73 (IRLRRTMLGMSQEKLGESLGITFQQIQKYEKGTNRVGASRLQNISQILNVPVSFF) is the HTH cro/C1-type domain. The H-T-H motif DNA-binding region spans 30 to 49 (QEKLGESLGITFQQIQKYEK).

This is an uncharacterized protein from Rhizobium meliloti (strain 1021) (Ensifer meliloti).